The following is a 473-amino-acid chain: MKILYSLRRFYHVETLFNGTFVLAGRDQETTGFPWWAGNARLINLSGKLLGAHVAHAGLIVFWAGAMNLFEVAHFVPEKPMYEQGLILLPHLATLGWGVGSGGEVLDTFPYFVSGVLHLISSAVLGFGGIYHALLGPETLEESFPFFGYVWQDRNKMTTLLGIHLILLGLGAFLLVLKALYFGGVYDTWAPGGGDVRKITNLTLSPGVIFGYLLKSPFGGEGWIVSVDDLEDIIGGHVWLGSICVLGGIWHILTKPFAWARRAFVWSGEAYLSYSLGALSVFGFIACCFVWFNNTAYPSEFYGPTGPEASQAQAFTFLVRDQRLGANVGSAQGPTGLGKYLMRSPTGEVIFGGETMRFWDLRAPWLEPLRGPNGLDLSRLKKDGQPWQERRSGEYMTHAPLGSLNSVGGVATEINAVNYVSPRSWLATSHFVLGFFFFVGHLWHAGRARAAAAGFEKGIDRDLEPVVYMTPLN.

Positions 1 to 14 are excised as a propeptide; the sequence is MKILYSLRRFYHVE. Thr15 carries the N-acetylthreonine modification. Thr15 carries the post-translational modification Phosphothreonine. A run of 5 helical transmembrane segments spans residues 69–93, 134–155, 178–200, 255–275, and 291–312; these read LFEV…PHLA, LLGP…QDRN, KALY…RKIT, KPFA…LSYS, and WFNN…ASQA. A [CaMn4O5] cluster-binding site is contributed by Glu367. A helical membrane pass occupies residues 447 to 471; the sequence is RARAAAAGFEKGIDRDLEPVVYMTP.

It belongs to the PsbB/PsbC family. PsbC subfamily. PSII is composed of 1 copy each of membrane proteins PsbA, PsbB, PsbC, PsbD, PsbE, PsbF, PsbH, PsbI, PsbJ, PsbK, PsbL, PsbM, PsbT, PsbX, PsbY, PsbZ, Psb30/Ycf12, at least 3 peripheral proteins of the oxygen-evolving complex and a large number of cofactors. It forms dimeric complexes. Requires Binds multiple chlorophylls and provides some of the ligands for the Ca-4Mn-5O cluster of the oxygen-evolving complex. It may also provide a ligand for a Cl- that is required for oxygen evolution. PSII binds additional chlorophylls, carotenoids and specific lipids. as cofactor. Phosphorylated in both bundle sheath and mesophyll cells, phosphorylation increases when cells are grown under high rather than low light regimes (70 vs 900 umol photons/m-2/s).

It is found in the plastid. It localises to the chloroplast thylakoid membrane. One of the components of the core complex of photosystem II (PSII). It binds chlorophyll and helps catalyze the primary light-induced photochemical processes of PSII. PSII is a light-driven water:plastoquinone oxidoreductase, using light energy to abstract electrons from H(2)O, generating O(2) and a proton gradient subsequently used for ATP formation. The protein is Photosystem II CP43 reaction center protein of Zea mays (Maize).